Consider the following 396-residue polypeptide: Agropine synthesis cyclase (396 aa).

It belongs to the peptidase M24B family.

The polypeptide is Agropine synthesis cyclase (ags) (Rhizobium rhizogenes (Agrobacterium rhizogenes)).